The primary structure comprises 199 residues: Adenylate kinase (199 aa).

ATP is bound at residue glycine 10–threonine 15. The NMP stretch occupies residues serine 30–valine 59. AMP is bound by residues threonine 31, arginine 36, glycine 57–valine 59, glycine 85–arginine 88, and glutamine 92. The segment at lysine 126 to aspartate 142 is LID. An ATP-binding site is contributed by arginine 127. Arginine 139 and arginine 150 together coordinate AMP. Alanine 178 contacts ATP.

It belongs to the adenylate kinase family. As to quaternary structure, monomer.

It is found in the cytoplasm. The catalysed reaction is AMP + ATP = 2 ADP. Its pathway is purine metabolism; AMP biosynthesis via salvage pathway; AMP from ADP: step 1/1. Its function is as follows. Catalyzes the reversible transfer of the terminal phosphate group between ATP and AMP. Plays an important role in cellular energy homeostasis and in adenine nucleotide metabolism. The sequence is that of Adenylate kinase from Methylobacterium nodulans (strain LMG 21967 / CNCM I-2342 / ORS 2060).